A 717-amino-acid chain; its full sequence is MIYQSPTIEVELLEDNIAHLCFKAQGSVNKFDRETIDSLNAALDSIKQDSSIKALMLSSAKDAFVVGADITEFLGLFAEEDTVLQSWLEQANVVFNKLEDLPFPTISAINGFALGAGCETILATDFRIADTTARIGLPETKLGIIPGFGGTVRLPRVIGADNALEWITSGKDQRPEAALKVGAIDAVVAPEQLKPAALKMLKDALIEKLDWQTRRAKKQAPLTLPKLEAMMSFATAKGMVFKVAGKHYPAPMAVISVIEQAAQLDRAGALQVEHQAFIKLAKTEVAQALIGIFLNDQLVKGKAKKAGKLAKKVNSAAVLGAGIMGGGIAYQSASKGTPIVMKDIAQPALDLGLGEAAKLLTAQVKRGRSTPAKMAAVLNNITPALDYAPVKDADVVVEAVVEHPKVKSMVLAEVEQHVSEDAIITSNTSTISINLLAKSLKKPERFCGMHFFNPVHKMPLVEVIRGENSSDETVASVVAYASKMGKTPIVVNDCPGFFVNRVLFPYFAGFSGLLADGADFAAIDKVMEKQFGWPMGPAYLLDVVGLDTGHHAQAVMAEGFPDRMGKTGKDAIDVMFEAERFGQKNSKGFYQYSVDRRGKPKKDLDPTSYELLQAEFGEQKAFESDEIIARTMIPMIIETVRCLEEGIIASPAEADMGLVYGLGFPPFRGGVFRYLDTMGVANFVALADKYAHLGGLYQVTDTMRELAANNGSYYQQA.

The interval 1 to 189 (MIYQSPTIEV…KVGAIDAVVA (189 aa)) is enoyl-CoA hydratase/isomerase. Residue D296 coordinates substrate. The segment at 311–717 (KKVNSAAVLG…ANNGSYYQQA (407 aa)) is 3-hydroxyacyl-CoA dehydrogenase. NAD(+) is bound by residues M324, D343, 400–402 (VVE), K407, and S429. The active-site For 3-hydroxyacyl-CoA dehydrogenase activity is H450. Residue N453 coordinates NAD(+). 2 residues coordinate substrate: N500 and Y660.

The protein in the N-terminal section; belongs to the enoyl-CoA hydratase/isomerase family. In the C-terminal section; belongs to the 3-hydroxyacyl-CoA dehydrogenase family. In terms of assembly, heterotetramer of two alpha chains (FadB) and two beta chains (FadA).

It carries out the reaction a (3S)-3-hydroxyacyl-CoA + NAD(+) = a 3-oxoacyl-CoA + NADH + H(+). It catalyses the reaction a (3S)-3-hydroxyacyl-CoA = a (2E)-enoyl-CoA + H2O. The enzyme catalyses a 4-saturated-(3S)-3-hydroxyacyl-CoA = a (3E)-enoyl-CoA + H2O. The catalysed reaction is (3S)-3-hydroxybutanoyl-CoA = (3R)-3-hydroxybutanoyl-CoA. It carries out the reaction a (3Z)-enoyl-CoA = a 4-saturated (2E)-enoyl-CoA. It catalyses the reaction a (3E)-enoyl-CoA = a 4-saturated (2E)-enoyl-CoA. It functions in the pathway lipid metabolism; fatty acid beta-oxidation. Functionally, involved in the aerobic and anaerobic degradation of long-chain fatty acids via beta-oxidation cycle. Catalyzes the formation of 3-oxoacyl-CoA from enoyl-CoA via L-3-hydroxyacyl-CoA. It can also use D-3-hydroxyacyl-CoA and cis-3-enoyl-CoA as substrate. The protein is Fatty acid oxidation complex subunit alpha of Shewanella pealeana (strain ATCC 700345 / ANG-SQ1).